The sequence spans 1500 residues: Alpha-1-macroglobulin (1500 aa).

Positions methionine 1 to alanine 24 are cleaved as a signal peptide. A disulfide bond links cysteine 48 and cysteine 86. N-linked (GlcNAc...) asparagine glycosylation is found at asparagine 55, asparagine 61, and asparagine 157. Intrachain disulfides connect cysteine 249-cysteine 298 and cysteine 267-cysteine 286. 2 N-linked (GlcNAc...) asparagine glycosylation sites follow: asparagine 382 and asparagine 412. Cysteine 469 and cysteine 562 are oxidised to a cystine. Residue asparagine 568 is glycosylated (N-linked (GlcNAc...) asparagine). 6 disulfides stabilise this stretch: cysteine 594-cysteine 785, cysteine 642-cysteine 689, cysteine 835-cysteine 863, cysteine 861-cysteine 897, cysteine 935-cysteine 1344, and cysteine 1094-cysteine 1142. The segment at proline 686 to arginine 746 is bait region. 2 N-linked (GlcNAc...) asparagine glycosylation sites follow: asparagine 883 and asparagine 944. Positions cysteine 986–glutamine 989 form a cross-link, isoglutamyl cysteine thioester (Cys-Gln). Asparagine 1005 is a glycosylation site (N-linked (GlcNAc...) asparagine). The receptor-binding domain stretch occupies residues glutamate 1360 to alanine 1500. 2 N-linked (GlcNAc...) asparagine glycosylation sites follow: asparagine 1390 and asparagine 1448.

Belongs to the protease inhibitor I39 (alpha-2-macroglobulin) family. Homotetramer; disulfide-linked. As to expression, widely expressed. Highest level in ovary, testis, uterus and prostate. Protein found in plasma.

The protein resides in the secreted. Is able to inhibit all four classes of proteinases by a unique 'trapping' mechanism. This protein has a peptide stretch, called the 'bait region' which contains specific cleavage sites for different proteinases. When a proteinase cleaves the bait region, a conformational change is induced in the protein which traps the proteinase. The entrapped enzyme remains active against low molecular weight substrates (activity against high molecular weight substrates is greatly reduced). Following cleavage in the bait region a thioester bond is hydrolyzed and mediates the covalent binding of the protein to the proteinase. This chain is Alpha-1-macroglobulin, found in Rattus norvegicus (Rat).